Reading from the N-terminus, the 239-residue chain is MKIDILTLFPEMFSPLEHSIVGKAREKGLLDIQYHNFRENAEKARHVDDDPYGGGQGMLLRAQPIFDSFDAIEKKNPRVILLDPAGKQFDQAYAEDLAQEEELIFICGHYEGYDERIKTLVTDEISLGDYVLTGGELAAMTMIDATVRLIPEVIGKESSHQDDSFSSGLLEYPQYTRPYDYRGMVVPDVLMSGHHEKIRQWRLYESLKKTYERRPDLLEHYQLTVEEEKMLAEIKENKE.

Residues G108 and 127–132 (LGDYVL) each bind S-adenosyl-L-methionine.

Belongs to the RNA methyltransferase TrmD family. Homodimer.

It localises to the cytoplasm. It catalyses the reaction guanosine(37) in tRNA + S-adenosyl-L-methionine = N(1)-methylguanosine(37) in tRNA + S-adenosyl-L-homocysteine + H(+). Functionally, specifically methylates guanosine-37 in various tRNAs. This chain is tRNA (guanine-N(1)-)-methyltransferase, found in Streptococcus pneumoniae (strain JJA).